A 347-amino-acid chain; its full sequence is UDP-N-acetylenolpyruvoylglucosamine reductase (347 aa).

In terms of domain architecture, FAD-binding PCMH-type spans 17–187 (IEQLAAQLVV…TAVGLKFAKA (171 aa)). Arginine 163 is a catalytic residue. The active-site Proton donor is the serine 232. The active site involves glutamate 327.

The protein belongs to the MurB family. FAD is required as a cofactor.

It is found in the cytoplasm. The enzyme catalyses UDP-N-acetyl-alpha-D-muramate + NADP(+) = UDP-N-acetyl-3-O-(1-carboxyvinyl)-alpha-D-glucosamine + NADPH + H(+). It functions in the pathway cell wall biogenesis; peptidoglycan biosynthesis. Its function is as follows. Cell wall formation. The sequence is that of UDP-N-acetylenolpyruvoylglucosamine reductase from Vibrio cholerae serotype O1 (strain ATCC 39541 / Classical Ogawa 395 / O395).